Here is a 320-residue protein sequence, read N- to C-terminus: Lactamase-like protein GME11357 (320 aa).

The Zn(2+) site is built by histidine 106, histidine 108, aspartate 110, and histidine 111. Aspartate 110 functions as the Proton donor/acceptor in the catalytic mechanism.

Belongs to the metallo-beta-lactamase superfamily. The cofactor is Zn(2+).

It functions in the pathway secondary metabolite biosynthesis. Its function is as follows. Lactamase-like protein; part of the gene cluster that mediates the biosynthesis of dibenzodioxocinones such as pestalotiollide B, a novel class of inhibitors against cholesterol ester transfer protein (CEPT). The biosynthesis initiates from condensation of acetate and malonate units catalyzed by the non-reducing PKS pks8/GME11356. Pks8/GME11356 lacks a thioesterase (TE) domain, which is important to the cyclizing of the third ring of atrochrysone carboxylic acid, and the esterase GME11355 might play the role of TE and catalyzes the cyclization reaction of the C ring. The lactamase-like protein GME11357 (or other beta-lactamases in Pestalotiopsis microspora) probably hydrolyzes the thioester bond between the ACP of pks8/GME11356 and the intermediate to release atrochrysone carboxylic acid, which is spontaneously dehydrates to form endocrocin anthrone. Endocrocin anthrone is further converted to emodin via the endocrocin intermediate. Emodin is then oxidized by several enzymes such as the Baeyer-Villiger oxidase GME11358, the oxidoreductase GME11367, the short chain dehydrogenase/reductase GME11373, as well as by other oxidoreductases from the cluster, to modify the A and C rings and open the B ring, and finally yield monodictyphenone. The prenyltransferase GME11375 may catalyze the addition reaction between the C5 side chains and the carbon bone of dibenzodioxocinones. The remaining biochemical reactions to the final product dibenzodioxocinones should be methylation catalyzed by methyltransferase GME11366 and reduction and lactonization reaction catalyzed by a series of oxidordeuctases. This chain is Lactamase-like protein GME11357, found in Pestalotiopsis microspora.